A 388-amino-acid polypeptide reads, in one-letter code: Tumor protein p53-inducible protein 13 (388 aa).

The signal sequence occupies residues 1-27 (MVPPPPPPSRLLLVALVGLLSLHEVVA). Over 28-304 (EPAEEAGTRC…ARGPTPRTEE (277 aa)) the chain is Extracellular. The helical transmembrane segment at 305–325 (AAWAAMALTFLLVLLTLATLC) threads the bilayer. Residues 326-388 (TRLHRNFRRS…DSGPDSESSD (63 aa)) lie on the Cytoplasmic side of the membrane. Over residues 361 to 372 (PSRRIKRSRRRP) the composition is skewed to basic residues. The disordered stretch occupies residues 361–388 (PSRRIKRSRRRPLLPPTPDSGPDSESSD).

The protein localises to the cell membrane. Its subcellular location is the cytoplasm. Its function is as follows. May act as a tumor suppressor. Inhibits tumor cell growth, when overexpressed. The chain is Tumor protein p53-inducible protein 13 (Tp53i13) from Rattus norvegicus (Rat).